The primary structure comprises 220 residues: Deoxyribose-phosphate aldolase (220 aa).

Aspartate 89 functions as the Proton donor/acceptor in the catalytic mechanism. Lysine 151 acts as the Schiff-base intermediate with acetaldehyde in catalysis. Lysine 180 serves as the catalytic Proton donor/acceptor.

Belongs to the DeoC/FbaB aldolase family. DeoC type 1 subfamily.

The protein resides in the cytoplasm. It catalyses the reaction 2-deoxy-D-ribose 5-phosphate = D-glyceraldehyde 3-phosphate + acetaldehyde. It functions in the pathway carbohydrate degradation; 2-deoxy-D-ribose 1-phosphate degradation; D-glyceraldehyde 3-phosphate and acetaldehyde from 2-deoxy-alpha-D-ribose 1-phosphate: step 2/2. Functionally, catalyzes a reversible aldol reaction between acetaldehyde and D-glyceraldehyde 3-phosphate to generate 2-deoxy-D-ribose 5-phosphate. This is Deoxyribose-phosphate aldolase from Thermus thermophilus (strain ATCC BAA-163 / DSM 7039 / HB27).